We begin with the raw amino-acid sequence, 336 residues long: Ribosomal RNA large subunit methyltransferase F (336 aa).

The protein belongs to the methyltransferase superfamily. METTL16/RlmF family.

It localises to the cytoplasm. It catalyses the reaction adenosine(1618) in 23S rRNA + S-adenosyl-L-methionine = N(6)-methyladenosine(1618) in 23S rRNA + S-adenosyl-L-homocysteine + H(+). Its function is as follows. Specifically methylates the adenine in position 1618 of 23S rRNA. In Yersinia pestis (strain Pestoides F), this protein is Ribosomal RNA large subunit methyltransferase F.